We begin with the raw amino-acid sequence, 85 residues long: UPF0335 protein Atu3758 (85 aa).

It belongs to the UPF0335 family.

The polypeptide is UPF0335 protein Atu3758 (Agrobacterium fabrum (strain C58 / ATCC 33970) (Agrobacterium tumefaciens (strain C58))).